The primary structure comprises 292 residues: 4-hydroxy-tetrahydrodipicolinate synthase (292 aa).

Thr-45 serves as a coordination point for pyruvate. The active-site Proton donor/acceptor is the Tyr-133. Residue Lys-161 is the Schiff-base intermediate with substrate of the active site. Ile-203 lines the pyruvate pocket.

Belongs to the DapA family. As to quaternary structure, homodimer.

The protein localises to the cytoplasm. The enzyme catalyses L-aspartate 4-semialdehyde + pyruvate = (2S,4S)-4-hydroxy-2,3,4,5-tetrahydrodipicolinate + H2O + H(+). The protein operates within amino-acid biosynthesis; L-lysine biosynthesis via DAP pathway; (S)-tetrahydrodipicolinate from L-aspartate: step 3/4. Catalyzes the condensation of (S)-aspartate-beta-semialdehyde [(S)-ASA] and pyruvate to 4-hydroxy-tetrahydrodipicolinate (HTPA). The polypeptide is 4-hydroxy-tetrahydrodipicolinate synthase (Pseudomonas syringae pv. syringae (strain B728a)).